The primary structure comprises 2248 residues: Zinc finger protein lin-13 (2248 aa).

Positions 1–189 are disordered; the sequence is MDEFELFQQL…TYASQYSRPP (189 aa). Positions 29–38 are enriched in polar residues; sequence QQANNNQSAP. Residues 54–92 show a composition bias toward basic and acidic residues; the sequence is KQREEEEAQRLADFMQKDMKEPAVKRKRGSEEYKKDPLE. Positions 145 to 155 are enriched in acidic residues; that stretch reads ELDENYMEENE. The short motif at 440–444 is the Required for interaction with hpl-2 isoform a element; sequence PLVPV. The C2H2-type 1 zinc finger occupies 503–525; sequence HTCIKCGKTFGTEFMLKHHAQSH. A disordered region spans residues 603–665; that stretch reads KTKKENRNIT…FTSSKQKKKR (63 aa). The segment covering 605–620 has biased composition (basic and acidic residues); it reads KKENRNITDSNEKEFS. 6 C2H2-type zinc fingers span residues 812 to 837, 959 to 982, 1140 to 1162, 1556 to 1578, 1601 to 1623, and 1657 to 1680; these read VRCI…SDVH, YSCS…TRFH, LMCY…MDDH, FKCQ…MRDH, WLCR…MAIH, and YSCG…SVAH. Residues 1859–1877 show a composition bias toward polar residues; the sequence is PRSSLQTNGSSMGSVTTNG. The tract at residues 1859–1900 is disordered; the sequence is PRSSLQTNGSSMGSVTTNGGRVVRPSPPNSMNVTLRRAPPQQ.

As to quaternary structure, interacts (via PLVPV motif) with chromobox protein homolog hpl-2 (via chromo (shadow subtype) domain); the interaction is direct and influences localization of hpl-2 to nuclear foci. In terms of tissue distribution, in the L3 stage, expressed in syncytial hypodermal cell 7, body wall muscles, intestinal cells, distal tip cells and many neurons.

It localises to the nucleus. Involved in repression of vulval fate, possibly by a tumor suppressor protein Rb-mediated mechanism. May act in a common pathway with retinoblastoma-like protein homolog lin-35 and hpl-2 to influence the ER stress response in the intestine. Plays a role in recruiting chromobox protein homolog hpl-2 to specific chromatin sites. The chain is Zinc finger protein lin-13 (lin-13) from Caenorhabditis elegans.